We begin with the raw amino-acid sequence, 494 residues long: Alpha-amylase-related protein (494 aa).

An N-terminal signal peptide occupies residues 1 to 20; that stretch reads MIKFALALTLCLAGASLSLA. Glutamine 21 is subject to Pyrrolidone carboxylic acid. Cysteine 48 and cysteine 104 are disulfide-bonded. The Ca(2+) site is built by asparagine 118, glutamine 169, and aspartate 178. Cysteine 157 and cysteine 171 are disulfide-bonded. Chloride is bound at residue arginine 206. The active-site Nucleophile is aspartate 208. A Ca(2+)-binding site is contributed by histidine 212. Residue glutamate 245 is the Proton donor of the active site. Chloride is bound by residues asparagine 308 and arginine 343. Cystine bridges form between cysteine 376-cysteine 382, cysteine 418-cysteine 441, and cysteine 448-cysteine 460.

It belongs to the glycosyl hydrolase 13 family. Monomer. Requires Ca(2+) as cofactor. The cofactor is chloride.

The protein resides in the secreted. It carries out the reaction Endohydrolysis of (1-&gt;4)-alpha-D-glucosidic linkages in polysaccharides containing three or more (1-&gt;4)-alpha-linked D-glucose units.. The sequence is that of Alpha-amylase-related protein (Amyrel) from Drosophila lini (Fruit fly).